Here is a 489-residue protein sequence, read N- to C-terminus: 3-octaprenyl-4-hydroxybenzoate carboxy-lyase (489 aa).

Position 172 (N172) interacts with Mn(2+). Prenylated FMN-binding positions include 175–177, 189–191, and 194–195; these read IYR, RWL, and RG. E238 is a binding site for Mn(2+). The active-site Proton donor is the D287.

It belongs to the UbiD family. As to quaternary structure, homohexamer. Requires prenylated FMN as cofactor. The cofactor is Mn(2+).

The protein localises to the cell membrane. It catalyses the reaction a 4-hydroxy-3-(all-trans-polyprenyl)benzoate + H(+) = a 2-(all-trans-polyprenyl)phenol + CO2. The protein operates within cofactor biosynthesis; ubiquinone biosynthesis. Its function is as follows. Catalyzes the decarboxylation of 3-octaprenyl-4-hydroxy benzoate to 2-octaprenylphenol, an intermediate step in ubiquinone biosynthesis. The polypeptide is 3-octaprenyl-4-hydroxybenzoate carboxy-lyase (Salmonella paratyphi B (strain ATCC BAA-1250 / SPB7)).